The sequence spans 105 residues: Small ribosomal subunit protein uS10 (105 aa).

Belongs to the universal ribosomal protein uS10 family. Part of the 30S ribosomal subunit.

Its function is as follows. Involved in the binding of tRNA to the ribosomes. The chain is Small ribosomal subunit protein uS10 from Synechococcus sp. (strain JA-3-3Ab) (Cyanobacteria bacterium Yellowstone A-Prime).